Here is a 366-residue protein sequence, read N- to C-terminus: Neutral protease 2 homolog BDBG_02110 (366 aa).

A signal peptide spans 1 to 19 (MQLSSVLLTAAGLLAPVYS). Positions 23 to 184 (ISIGRRSEGL…RAKIHDHLAQ (162 aa)) are excised as a propeptide. 2 N-linked (GlcNAc...) asparagine glycosylation sites follow: Asn-123 and Asn-192. A disulfide bridge connects residues Cys-272 and Cys-290. Position 314 (His-314) interacts with Zn(2+). Glu-315 is an active-site residue. Residue His-318 coordinates Zn(2+).

It belongs to the peptidase M35 family. Requires Zn(2+) as cofactor.

The protein localises to the secreted. The catalysed reaction is Preferential cleavage of bonds with hydrophobic residues in P1'. Also 3-Asn-|-Gln-4 and 8-Gly-|-Ser-9 bonds in insulin B chain.. Secreted metalloproteinase that allows assimilation of proteinaceous substrates. Shows high activities on basic nuclear substrates such as histone and protamine. This Blastomyces gilchristii (strain SLH14081) (Blastomyces dermatitidis) protein is Neutral protease 2 homolog BDBG_02110.